The primary structure comprises 266 residues: Phosphatidylglycerol--prolipoprotein diacylglyceryl transferase (266 aa).

A run of 7 helical transmembrane segments spans residues 10–30, 56–76, 92–112, 120–140, 171–191, 199–219, and 233–253; these read VALA…LIGI, LVFW…VLFY, WKGG…VWWF, FFQL…AGRI, PSQL…LWLF, ASVS…VEFV, and WLTM…ALMV. A 1,2-diacyl-sn-glycero-3-phospho-(1'-sn-glycerol) is bound at residue Arg139.

Belongs to the Lgt family.

The protein localises to the cell inner membrane. The catalysed reaction is L-cysteinyl-[prolipoprotein] + a 1,2-diacyl-sn-glycero-3-phospho-(1'-sn-glycerol) = an S-1,2-diacyl-sn-glyceryl-L-cysteinyl-[prolipoprotein] + sn-glycerol 1-phosphate + H(+). Its pathway is protein modification; lipoprotein biosynthesis (diacylglyceryl transfer). Catalyzes the transfer of the diacylglyceryl group from phosphatidylglycerol to the sulfhydryl group of the N-terminal cysteine of a prolipoprotein, the first step in the formation of mature lipoproteins. In Pseudomonas paraeruginosa (strain DSM 24068 / PA7) (Pseudomonas aeruginosa (strain PA7)), this protein is Phosphatidylglycerol--prolipoprotein diacylglyceryl transferase.